Consider the following 297-residue polypeptide: Tyrosine recombinase XerC (297 aa).

In terms of domain architecture, Core-binding (CB) spans 1–84 (MEEIQVTFLN…TLRTFYEFWM (84 aa)). One can recognise a Tyr recombinase domain in the interval 105-286 (YLPQFFYEEE…SNQQLRKVYL (182 aa)). Residues arginine 145, lysine 169, histidine 238, arginine 241, and histidine 264 contribute to the active site. The O-(3'-phospho-DNA)-tyrosine intermediate role is filled by tyrosine 273.

It belongs to the 'phage' integrase family. XerC subfamily. In terms of assembly, forms a cyclic heterotetrameric complex composed of two molecules of XerC and two molecules of XerD.

The protein resides in the cytoplasm. Site-specific tyrosine recombinase, which acts by catalyzing the cutting and rejoining of the recombining DNA molecules. The XerC-XerD complex is essential to convert dimers of the bacterial chromosome into monomers to permit their segregation at cell division. It also contributes to the segregational stability of plasmids. This chain is Tyrosine recombinase XerC, found in Staphylococcus haemolyticus (strain JCSC1435).